A 273-amino-acid chain; its full sequence is NAD-dependent protein deacylase (273 aa).

The Deacetylase sirtuin-type domain occupies 20–272; the sequence is RERLRQRIFF…PEFVEKLLKG (253 aa). 48–67 contacts NAD(+); the sequence is GAGISAESGIRTFRAADGLW. Positions 92 and 95 each coordinate substrate. 129-132 is an NAD(+) binding site; sequence QNID. The active-site Proton acceptor is histidine 147. Zn(2+) is bound by residues cysteine 155 and cysteine 174. NAD(+) is bound by residues 214–216, 240–242, and alanine 258; these read GTS and NLE.

This sequence belongs to the sirtuin family. Class III subfamily. Zn(2+) is required as a cofactor.

Its subcellular location is the cytoplasm. The catalysed reaction is N(6)-acetyl-L-lysyl-[protein] + NAD(+) + H2O = 2''-O-acetyl-ADP-D-ribose + nicotinamide + L-lysyl-[protein]. The enzyme catalyses N(6)-succinyl-L-lysyl-[protein] + NAD(+) + H2O = 2''-O-succinyl-ADP-D-ribose + nicotinamide + L-lysyl-[protein]. It carries out the reaction N(6)-(2-hydroxyisobutanoyl)-L-lysyl-[protein] + NAD(+) + H2O = 2''-O-(2-hydroxyisobutanoyl)-ADP-D-ribose + nicotinamide + L-lysyl-[protein]. NAD-dependent lysine deacetylase that specifically removes acetyl groups on target proteins. Also acts as a protein-lysine deacylase by mediating protein desuccinylation and de-2-hydroxyisobutyrylation. Modulates the activities of several proteins which are inactive in their acylated form. This Escherichia coli O157:H7 protein is NAD-dependent protein deacylase.